Here is a 428-residue protein sequence, read N- to C-terminus: Ammonium transporter AmtB (428 aa).

The first 22 residues, 1-22 (MKIATIKTGLASLAMLPGLVMA), serve as a signal peptide directing secretion. At 23-32 (APAVADKADN) the chain is on the periplasmic side. A helical membrane pass occupies residues 33 to 54 (AFMMICTALVLFMTIPGIALFY). Over 55–65 (GGLIRGKNVLS) the chain is Cytoplasmic. A helical membrane pass occupies residues 66-90 (MLTQVTVTFALVCILWVVYGYSLAF). The Periplasmic portion of the chain corresponds to 91–119 (GEGNNFFGNINWLMLKNIELTAVMGSIYQ). Residues 120–142 (YIHVAFQGSFACITVGLIVGALA) form a helical membrane-spanning segment. Over 143-146 (ERIR) the chain is Cytoplasmic. A helical transmembrane segment spans residues 147 to 171 (FSAVLIFVVVWLTLSYIPIAHMVWG). The Periplasmic portion of the chain corresponds to 172 to 185 (GGLLASHGALDFAG). Residues 186-201 (GTVVHINAAIAGLVGA) form a helical membrane-spanning segment. Residues 202–221 (YLIGKRVGFGKEAFKPHNLP) lie on the Cytoplasmic side of the membrane. The chain crosses the membrane as a helical span at residues 222-241 (MVFTGTAILYIGWFGFNAGS). S241 contacts NH4(+). The Periplasmic portion of the chain corresponds to 242–248 (AGTANEI). The helical transmembrane segment at 249–273 (AALAFVNTVVATAAAILGWIFGEWA) threads the bilayer. Over 274–279 (LRGKPS) the chain is Cytoplasmic. The chain crosses the membrane as a helical span at residues 280–300 (LLGACSGAIAGLVGVTPACGY). At 301-302 (IG) the chain is on the periplasmic side. The helical transmembrane segment at 303 to 321 (VGGALIIGVVAGLAGLWGV) threads the bilayer. Topologically, residues 322–333 (TMLKRLLRVDDP) are cytoplasmic. Residues 334–355 (CDVFGVHGVCGIVGCIMTGIFA) traverse the membrane as a helical segment. Residues 356–370 (ASSLGGVGFAEGVTM) are Periplasmic-facing. A helical transmembrane segment spans residues 371-399 (GHQLLVQLESIAITIVWSGVVAFIGYKLA). Residues 400 to 428 (DLTVGLRVPEEQEREGLDVNSHGENAYNA) are Cytoplasmic-facing.

This sequence belongs to the ammonia transporter channel (TC 1.A.11.2) family. In terms of assembly, homotrimer. In response to elevation of the extracellular ammonium concentration, interacts and forms a complex with GlnK.

Its subcellular location is the cell inner membrane. With respect to regulation, in the presence of high extracellular ammonium concentrations, transport activity is inhibited by interaction with the regulatory protein GlnK. Formation of the GlnK-AmtB complex is influenced by intracellular pools of the effector molecules ATP, ADP, Mg(2+) and 2-oxoglutarate. The GlnK-AmtB interaction is also controlled by the level of intracellular glutamine and the uridylylation status of GlnK. In terms of biological role, involved in the uptake of ammonium/ammonia (NH(4)(+)/NH(3)). Transport is electrogenic. Following sequestration of NH(4)(+) at the periplasmic face, NH(4)(+) is deprotonated and neutral NH(3) is transported into the cytoplasm. Neutral NH(3) and charged H(+) are carried separately across the membrane on a unique two-lane pathway, before recombining to NH(4)(+) inside the cell. The protein is Ammonium transporter AmtB (amtB) of Escherichia coli O157:H7.